Consider the following 329-residue polypeptide: tRNA (guanine(10)-N2)-dimethyltransferase (329 aa).

The 104-residue stretch at 40–143 (NVENVEIFER…KLWIGIRIRE (104 aa)) folds into the THUMP domain.

The protein belongs to the methyltransferase superfamily. Trm-G10 family. Monomer.

The protein resides in the cytoplasm. The catalysed reaction is guanosine(10) in tRNA + 2 S-adenosyl-L-methionine = N(2)-dimethylguanosine(10) in tRNA + 2 S-adenosyl-L-homocysteine + 2 H(+). In terms of biological role, catalyzes the adenosylmethionine-dependent methylation of the exocyclic amino group (N(2)) of guanosine at position 10 of various tRNAs. Acts via a two-step process that leads to the formation of either N(2)-monomethyl (m(2)G) or N(2)-dimethylguanosine (m(2)(2)G). The chain is tRNA (guanine(10)-N2)-dimethyltransferase (trmG10) from Pyrococcus abyssi (strain GE5 / Orsay).